Here is a 465-residue protein sequence, read N- to C-terminus: Sorting nexin-8 (465 aa).

A compositionally biased stretch (low complexity) spans 1 to 19 (MTGRAMDPLPAAAVGAAAE). The segment at 1–36 (MTGRAMDPLPAAAVGAAAEAEADEEADPPASDLPTP) is disordered. The PX domain occupies 73-181 (ARDTVQVELI…KLFLSFSGSD (109 aa)). A 1,2-diacyl-sn-glycero-3-phospho-(1D-myo-inositol-3-phosphate)-binding residues include Arg-109, Lys-135, and Arg-148. Phosphothreonine is present on Thr-452. At Ser-456 the chain carries Phosphoserine.

The protein belongs to the sorting nexin family.

The protein localises to the early endosome membrane. Functionally, may be involved in several stages of intracellular trafficking. May play a role in intracellular protein transport from early endosomes to the trans-Golgi network. The polypeptide is Sorting nexin-8 (SNX8) (Homo sapiens (Human)).